The chain runs to 600 residues: MSMRTEYCGLVTEHLLGQTVSLCGWVQRRRDHGGVIFIDLRDREGLVQVVCDPDRGEMFATAEGVRNEFCVQIKGLVRNRPEGTVNAGLKSGKIEVLCHELIVLNASVTPPFQLDDDNLSETTRLTHRVLDLRRPQMQHNLRLRYRVAIEARKYLDEQGFIDIETPMLTKSTPEGARDYLVPSRVNAGQFFALPQSPQLFKQLLMVANFDRYYQITKCFRDEDLRADRQPEFTQIDCETSFLGEQEIRDLFEDMIRHIFKTTIDVELDAKFPVMPYSEAMARFGSDKPDLRVKLEFTELTDAMKDVDFKVFSTPANAKDGRVAALRVPKGGELSRGDIDGYTEFVRIYGAKGLAWIKVNEKAKGRDGLQSPIVKNLHDASIAAILERTGAEDGDIIFFAADRAKVVNDSLGALRLKIGHSEFGKANGLVEAGWKPLWVVDFPMFEYDDEDARYVAAHHPFTSPKDEHLEYLETDPGRCLAKAYDMVLNGWEIGGGSVRIHREEVQSKVFRALKIGAEEAQAKFGFLLDALQYGAPPHGGIAFGLDRIVTMMAGADSIRDVIAFPKTQRAQDLLTQAPSPVDERQLRELHIRLRQPEQPKA.

Glutamate 174 lines the L-aspartate pocket. Positions 198-201 are aspartate; sequence QLFK. Arginine 220 contributes to the L-aspartate binding site. ATP-binding positions include 220 to 222 and glutamine 229; that span reads RDE. Histidine 457 lines the L-aspartate pocket. Glutamate 491 contributes to the ATP binding site. Arginine 498 lines the L-aspartate pocket. 543–546 lines the ATP pocket; the sequence is GLDR.

This sequence belongs to the class-II aminoacyl-tRNA synthetase family. Type 1 subfamily. Homodimer.

It is found in the cytoplasm. The catalysed reaction is tRNA(Asx) + L-aspartate + ATP = L-aspartyl-tRNA(Asx) + AMP + diphosphate. In terms of biological role, aspartyl-tRNA synthetase with relaxed tRNA specificity since it is able to aspartylate not only its cognate tRNA(Asp) but also tRNA(Asn). Reaction proceeds in two steps: L-aspartate is first activated by ATP to form Asp-AMP and then transferred to the acceptor end of tRNA(Asp/Asn). This chain is Aspartate--tRNA(Asp/Asn) ligase, found in Burkholderia vietnamiensis (strain G4 / LMG 22486) (Burkholderia cepacia (strain R1808)).